A 333-amino-acid chain; its full sequence is DNA-directed RNA polymerase subunit alpha (333 aa).

The segment at 1–246 (MEKFIKINWT…AHLNIIGDVN (246 aa)) is alpha N-terminal domain (alpha-NTD). Residues 263-333 (HSKTQNILIQ…YNVFLDKGEE (71 aa)) are alpha C-terminal domain (alpha-CTD).

It belongs to the RNA polymerase alpha chain family. In terms of assembly, homodimer. The RNAP catalytic core consists of 2 alpha, 1 beta, 1 beta' and 1 omega subunit. When a sigma factor is associated with the core the holoenzyme is formed, which can initiate transcription.

It carries out the reaction RNA(n) + a ribonucleoside 5'-triphosphate = RNA(n+1) + diphosphate. In terms of biological role, DNA-dependent RNA polymerase catalyzes the transcription of DNA into RNA using the four ribonucleoside triphosphates as substrates. This chain is DNA-directed RNA polymerase subunit alpha, found in Mycoplasma mobile (strain ATCC 43663 / 163K / NCTC 11711) (Mesomycoplasma mobile).